Here is a 429-residue protein sequence, read N- to C-terminus: 3-phosphoshikimate 1-carboxyvinyltransferase (429 aa).

3-phosphoshikimate-binding residues include K20, S21, and R25. K20 contributes to the phosphoenolpyruvate binding site. Residues G89 and R118 each coordinate phosphoenolpyruvate. S164, S165, Q166, S192, D311, and K338 together coordinate 3-phosphoshikimate. Position 166 (Q166) interacts with phosphoenolpyruvate. The active-site Proton acceptor is the D311. Positions 342 and 384 each coordinate phosphoenolpyruvate.

It belongs to the EPSP synthase family. In terms of assembly, monomer.

The protein localises to the cytoplasm. The enzyme catalyses 3-phosphoshikimate + phosphoenolpyruvate = 5-O-(1-carboxyvinyl)-3-phosphoshikimate + phosphate. It functions in the pathway metabolic intermediate biosynthesis; chorismate biosynthesis. Functionally, catalyzes the transfer of the enolpyruvyl moiety of phosphoenolpyruvate (PEP) to the 5-hydroxyl of shikimate-3-phosphate (S3P) to produce enolpyruvyl shikimate-3-phosphate and inorganic phosphate. In Methanococcus maripaludis (strain C6 / ATCC BAA-1332), this protein is 3-phosphoshikimate 1-carboxyvinyltransferase.